Here is a 155-residue protein sequence, read N- to C-terminus: MSKRNQVSYVRPAEPAFLSRFKERVGYREGPTVETKKIQPQLPDEDGNESDKEDEQPQVVVLKKGDLTAEEVMKIKAEIKAAKADEEPPPADGRIMYRKPVKRSSDEKCSGLTASSKKKKTNEDDVNKQSPVRKNSQKQIKNSSLLSFGSEDENE.

Disordered regions lie at residues 24–63 (RVGY…VVLK) and 80–155 (KAAK…DENE). Residues 43-56 (PDEDGNESDKEDEQ) are compositionally biased toward acidic residues. S50 carries the phosphoserine modification. The residue at position 108 (K108) is an N6-acetyllysine. Residues 128-147 (KQSPVRKNSQKQIKNSSLLS) show a composition bias toward polar residues. 3 positions are modified to phosphoserine: S130, S147, and S150.

This is an uncharacterized protein from Rattus norvegicus (Rat).